Here is a 1348-residue protein sequence, read N- to C-terminus: Putative late blight resistance protein homolog R1B-12 (1348 aa).

2 coiled-coil regions span residues Arg-446–Gln-469 and Pro-561–Asn-583. The NB-ARC domain maps to Arg-552 to Glu-848. ATP is bound at residue Gly-595–Thr-602. 8 LRR repeats span residues Phe-977–Leu-1001, Leu-1051–Leu-1074, Pro-1123–Gln-1147, Tyr-1151–His-1170, Leu-1171–Asn-1194, Phe-1197–Ala-1219, Phe-1220–Ile-1244, and Leu-1309–Ala-1332. The 65-residue stretch at Val-1284–Leu-1348 folds into the HMA domain.

It belongs to the disease resistance NB-LRR family.

It is found in the cytoplasm. It localises to the membrane. Functionally, confers resistance to late blight (Phytophthora infestans) races carrying the avirulence gene Avr1. Resistance proteins guard the plant against pathogens that contain an appropriate avirulence protein via an indirect interaction with this avirulence protein. That triggers a defense system including the hypersensitive response, which restricts the pathogen growth. The polypeptide is Putative late blight resistance protein homolog R1B-12 (R1B-12) (Solanum demissum (Wild potato)).